A 310-amino-acid polypeptide reads, in one-letter code: MESTQQMASSIINTSFEAAVVAATSTLELMGIQYDYNEVYTRVKSKFDYIMDDSGVKNNLLGKAATIDQALNGKFGSAVRNRNWMADTRTTARLDEDVNKLRMMLSSKGIDQKMRVLNACFSVKRVPGKSSSIIKCTRLMRDKIERGEVEVDDSFVEEKMEVDTIDWKSRYEQLEKRFESLKQRVNEKYTSWVQKAKKVNENMYSLQNVISQQQSQIADLQHYCNKLEVDLQNKISSLVSSVEWYMKSMELPGEIKTDIEQQLNSIDVINPINAIDDFESLIRNIILDYDRIFLMFKGLMRQCNYEYTYE.

Positions 1-146 (MESTQQMASS…TRLMRDKIER (146 aa)) are RNA-binding. The interval 147–203 (GEVEVDDSFVEEKMEVDTIDWKSRYEQLEKRFESLKQRVNEKYTSWVQKAKKVNENM) is dimerization. Residues 163 to 234 (DTIDWKSRYE…NKLEVDLQNK (72 aa)) adopt a coiled-coil conformation. The interaction with host ZC3H7B stretch occupies residues 167–231 (WKSRYEQLEK…HYCNKLEVDL (65 aa)). The interval 205–310 (SLQNVISQQQ…RQCNYEYTYE (106 aa)) is interaction with host EIF4G1.

This sequence belongs to the rotavirus NSP3 family. In terms of assembly, homodimer. Interacts (via the coiled-coil region) with host ZC3H7B (via LD motif). Interacts with host EIF4G1.

The protein resides in the host cytoplasm. Functionally, plays an important role in stimulating the translation of viral mRNAs. These mRNAs are capped but not polyadenylated, instead terminating in a conserved sequence 'GACC' at the 3' that is recognized by NSP3, which competes with host PABPC1 for EIF4G1 binding. The interaction between NSP3 and host EIF4G1 stabilizes the EIF4E-EIF4G1 interaction, thereby facilitating the initiation of capped mRNA translation. This Rotavirus A (isolate RVA/Human/United Kingdom/A64/1987/G10P11[14]) (RV-A) protein is Non-structural protein 3.